Here is a 207-residue protein sequence, read N- to C-terminus: MYSAPSACTCLCLHFLLLCFQVQVLAAEENVDFRIHVENQTRARDDVSRKQLRLYQLYSRTSGKHIQVLGRRISARGEDGDKYAQLLVETDTFGSQVRIKGKETEFYLCMNRKGKLVGKPDGTSKECVFIEKVLENNYTALMSAKYSGWYVGFTKKGRPRKGPKTRENQQDVHFMKRYPKGQTELQKPFKYTTVTKRSRRIRPTHPG.

An N-terminal signal peptide occupies residues 1–27; it reads MYSAPSACTCLCLHFLLLCFQVQVLAA. Residue N39 is glycosylated (N-linked (GlcNAc...) asparagine). C109 and C127 form a disulfide bridge. N-linked (GlcNAc...) asparagine glycosylation occurs at N137. The tract at residues 157–183 is disordered; the sequence is GRPRKGPKTRENQQDVHFMKRYPKGQT. Positions 164-174 are enriched in basic and acidic residues; it reads KTRENQQDVHF.

The protein belongs to the heparin-binding growth factors family. In terms of assembly, interacts with FGFR3 and FGFR4. As to expression, mainly expressed in the lung. Not detected in brain, heart, liver, kidney and small intestine.

The protein localises to the secreted. Plays an important role in the regulation of cell proliferation, cell differentiation and cell migration. Required for normal ossification and bone development. Stimulates hepatic and intestinal proliferation. The protein is Fibroblast growth factor 18 (Fgf18) of Rattus norvegicus (Rat).